A 242-amino-acid polypeptide reads, in one-letter code: Aspartate/glutamate leucyltransferase (242 aa).

It belongs to the R-transferase family. Bpt subfamily.

Its subcellular location is the cytoplasm. The enzyme catalyses N-terminal L-glutamyl-[protein] + L-leucyl-tRNA(Leu) = N-terminal L-leucyl-L-glutamyl-[protein] + tRNA(Leu) + H(+). The catalysed reaction is N-terminal L-aspartyl-[protein] + L-leucyl-tRNA(Leu) = N-terminal L-leucyl-L-aspartyl-[protein] + tRNA(Leu) + H(+). In terms of biological role, functions in the N-end rule pathway of protein degradation where it conjugates Leu from its aminoacyl-tRNA to the N-termini of proteins containing an N-terminal aspartate or glutamate. This is Aspartate/glutamate leucyltransferase from Chromobacterium violaceum (strain ATCC 12472 / DSM 30191 / JCM 1249 / CCUG 213 / NBRC 12614 / NCIMB 9131 / NCTC 9757 / MK).